The sequence spans 295 residues: Acetylglutamate kinase (295 aa).

Substrate-binding positions include 64–65, Arg86, and Asn190; that span reads GG.

The protein belongs to the acetylglutamate kinase family. ArgB subfamily.

It localises to the cytoplasm. The enzyme catalyses N-acetyl-L-glutamate + ATP = N-acetyl-L-glutamyl 5-phosphate + ADP. It participates in amino-acid biosynthesis; L-arginine biosynthesis; N(2)-acetyl-L-ornithine from L-glutamate: step 2/4. Its function is as follows. Catalyzes the ATP-dependent phosphorylation of N-acetyl-L-glutamate. In Heliobacterium modesticaldum (strain ATCC 51547 / Ice1), this protein is Acetylglutamate kinase.